The following is a 415-amino-acid chain: Adenosylhomocysteinase (415 aa).

Substrate contacts are provided by Thr53, Asp124, and Glu147. Thr148–Thr150 lines the NAD(+) pocket. The substrate site is built by Lys177 and Asp181. Residues Asn182, Gly211–Gly216, Glu234, Asn269, Ser290–His292, and Asn337 each bind NAD(+).

It belongs to the adenosylhomocysteinase family. NAD(+) is required as a cofactor.

The protein resides in the cytoplasm. It catalyses the reaction S-adenosyl-L-homocysteine + H2O = L-homocysteine + adenosine. It participates in amino-acid biosynthesis; L-homocysteine biosynthesis; L-homocysteine from S-adenosyl-L-homocysteine: step 1/1. May play a key role in the regulation of the intracellular concentration of adenosylhomocysteine. This Sulfurisphaera tokodaii (strain DSM 16993 / JCM 10545 / NBRC 100140 / 7) (Sulfolobus tokodaii) protein is Adenosylhomocysteinase.